The primary structure comprises 140 residues: Profilin-2 (140 aa).

Residue alanine 2 is modified to N-acetylalanine.

This sequence belongs to the profilin family. In terms of assembly, occurs in many kinds of cells as a complex with monomeric actin in a 1:1 ratio. Interacts with PFN2. Interacts with ACTMAP (via N-terminus); the interaction may facilitate efficient cleavage of the acetylated N-terminus of immature actin by ACTMAP.

It is found in the cytoplasm. The protein resides in the cytoskeleton. Binds to actin and affects the structure of the cytoskeleton. At high concentrations, profilin prevents the polymerization of actin, whereas it enhances it at low concentrations. By binding to PIP2, it inhibits the formation of IP3 and DG. The chain is Profilin-2 (PFN2) from Bos taurus (Bovine).